A 505-amino-acid polypeptide reads, in one-letter code: Flagellin (505 aa).

The protein belongs to the bacterial flagellin family.

The protein resides in the secreted. It is found in the bacterial flagellum. Its function is as follows. Flagellin is the subunit protein which polymerizes to form the filaments of bacterial flagella. This chain is Flagellin (fliC), found in Salmonella dublin.